We begin with the raw amino-acid sequence, 59 residues long: Large ribosomal subunit protein uL30 (59 aa).

Belongs to the universal ribosomal protein uL30 family. As to quaternary structure, part of the 50S ribosomal subunit.

This chain is Large ribosomal subunit protein uL30, found in Psychrobacter cryohalolentis (strain ATCC BAA-1226 / DSM 17306 / VKM B-2378 / K5).